A 499-amino-acid chain; its full sequence is Protein adenylyltransferase Fic (499 aa).

The helical transmembrane segment at 38-58 threads the bilayer; the sequence is FHYFVIFASGSLFSGLMFGLL. TPR repeat units follow at residues 126–159 and 160–194; these read ALSS…SPKH and PEIL…NPSH. The Inhibitory (S/T)XXXE(G/N) motif signature appears at 251-256; the sequence is SVGIEG. ATP-binding positions include glutamate 255 and 337-340; that span reads VGGH. One can recognise a Fido domain in the interval 306-441; that stretch reads ITLKDILEIH…IRPFVRFIAD (136 aa). The active site involves histidine 384. Residues 388 to 395, 420 to 421, and asparagine 428 each bind ATP; these read DGNGRTSR and YY.

The protein belongs to the fic family. As to quaternary structure, homodimer.

Its subcellular location is the membrane. It carries out the reaction L-tyrosyl-[protein] + ATP = O-(5'-adenylyl)-L-tyrosyl-[protein] + diphosphate. It catalyses the reaction L-threonyl-[protein] + ATP = 3-O-(5'-adenylyl)-L-threonyl-[protein] + diphosphate. The catalysed reaction is 3-O-(5'-adenylyl)-L-threonyl-[protein] + H2O = L-threonyl-[protein] + AMP + H(+). With respect to regulation, the side chain of Glu-255 determines which of the two opposing activities (AMPylase or de-AMPylase) will take place. In response to endoplasmic reticulum stress, mediates de-AMPylase activity. Adenylyltransferase activity is inhibited by the inhibitory helix present at the N-terminus: Glu-255 binds ATP and competes with ATP-binding at Arg-395, thereby preventing adenylyltransferase activity. In unstressed cells, disengagement of Glu-255 promotes adenylyltransferase activity. Activation dissociates ATP-binding from Glu-255, allowing ordered binding of the entire ATP moiety with the alpha-phosphate in an orientation that is productive for accepting an incoming target hydroxyl side chain. In terms of biological role, protein that can both mediate the addition of adenosine 5'-monophosphate (AMP) to specific residues of target proteins (AMPylation), and the removal of the same modification from target proteins (de-AMPylation), depending on the context. The side chain of Glu-255 determines which of the two opposing activities (AMPylase or de-AMPylase) will take place. Acts as a key regulator of the unfolded protein response (UPR) by mediating AMPylation or de-AMPylation of Hsc70-3/BiP. In unstressed cells, acts as an adenylyltransferase by mediating AMPylation of Hsc70-3/BiP at 'Thr-518', thereby inactivating it. In response to endoplasmic reticulum stress, acts as a phosphodiesterase by mediating removal of ATP (de-AMPylation) from Hsc70-3/BiP at 'Thr-518', leading to restore HSPA5/BiP activity. The chain is Protein adenylyltransferase Fic from Aedes aegypti (Yellowfever mosquito).